The chain runs to 37 residues: Photosystem II reaction center protein M (37 aa).

A helical membrane pass occupies residues 7-27 (GFIAVLMFLAIPTAFLLIPYV).

This sequence belongs to the PsbM family. In terms of assembly, PSII is composed of 1 copy each of membrane proteins PsbA, PsbB, PsbC, PsbD, PsbE, PsbF, PsbH, PsbI, PsbJ, PsbK, PsbL, PsbM, PsbT, PsbX, PsbY, PsbZ, Psb30/Ycf12, at least 3 peripheral proteins of the oxygen-evolving complex and a large number of cofactors. It forms dimeric complexes.

It is found in the plastid. Its subcellular location is the chloroplast thylakoid membrane. Functionally, one of the components of the core complex of photosystem II (PSII). PSII is a light-driven water:plastoquinone oxidoreductase that uses light energy to abstract electrons from H(2)O, generating O(2) and a proton gradient subsequently used for ATP formation. It consists of a core antenna complex that captures photons, and an electron transfer chain that converts photonic excitation into a charge separation. This subunit is found at the monomer-monomer interface. The polypeptide is Photosystem II reaction center protein M (Pinus koraiensis (Korean pine)).